Here is a 414-residue protein sequence, read N- to C-terminus: Serine/arginine-rich splicing factor SR45 (414 aa).

Disordered regions lie at residues 1-95 (MAKP…KAVQ) and 175-414 (LPPR…PRKT). 2 stretches are compositionally biased toward low complexity: residues 10 to 34 (SPSV…SRSI) and 42 to 60 (RSLS…GSRS). The short motif at 62–69 (PRRGKSPA) is the Nuclear localization signal 1 element. A Phosphoserine modification is found at Ser77. The RRM domain maps to 98–176 (LVLHVDSLSR…KVVKATFTLP (79 aa)). Residues 176–191 (PPRQKVSSPPKPVSAA) show a composition bias toward low complexity. The segment covering 205-220 (DAEKDGGPRRPRETSP) has biased composition (basic and acidic residues). Positions 218 to 219 (TS) are required for isoform 1 function in petal development. Basic residues predominate over residues 228–243 (PRRRSPLPRRGLSPRR). A Nuclear localization signal 2 motif is present at residues 229–236 (RRRSPLPR). A Phosphoserine modification is found at Ser256. 3 short sequence motifs (nuclear localization signal) span residues 284-291 (PRRYRSPP), 318-325 (PRRLRSPP), and 338-345 (IRRPGRSR). 2 stretches are compositionally biased toward basic residues: residues 285-343 (RRYR…RPGR) and 352-363 (RKGRGPAGRRGR). Low complexity predominate over residues 364–373 (SSSYSSSPSP). Positions 373 to 380 (PRRIPRKI) match the Nuclear localization signal 6 motif. The segment covering 375–394 (RIPRKISRSRSPKRPLRGKR) has biased composition (basic residues). The segment covering 404 to 414 (SPPPPPPPRKT) has biased composition (pro residues).

The protein belongs to the splicing factor SR family. SR45 subfamily. In terms of assembly, component of the spliceosome. Interacts with AFC2, U2AF35A, U2AF35B, RNU1, SCL33 and SKIP. The interaction with AFC2 depends on phosphorylation status. Interaction with RNU1 defines initial 5' splice sites and interaction with U2AF35B 3' splice sites in the early stage of spliceosome assembly. Post-translationally, phosphorylated by AFC2. The phosphorylation status regulates intranuclear distribution. In terms of tissue distribution, especially present in actively growing regions and dividing cells. Mostly expressed in roots (primary and secondary root meristem), shoot apical meristem (SAM), leaf primordia, pollen and inflorescence, and, to a lower extent, in leaves, vascular tissue, hydathode and fruits.

Its subcellular location is the nucleus speckle. It localises to the nucleus. The protein resides in the nucleoplasm. Functionally, involved in 5' and 3' splicing site selection of introns, and may bridge the 5' and 3' components of the spliceosome. Isoform 1 is required during flower petal development and isoform 2 is involved in root growth. Negatively regulates glucose and abscisic acid (ABA) signaling during early seedling development. Involved in the RNA-directed DNA methylation pathway. Modulates KIN10 stability in response to sugars, probably through the splicing regulation of 5PTASE13, a protein implicated in the proteasomal degradation of KIN10. This chain is Serine/arginine-rich splicing factor SR45, found in Arabidopsis thaliana (Mouse-ear cress).